We begin with the raw amino-acid sequence, 154 residues long: Aspartate carbamoyltransferase regulatory chain (154 aa).

Zn(2+)-binding residues include cysteine 109, cysteine 114, cysteine 138, and cysteine 141.

The protein belongs to the PyrI family. In terms of assembly, contains catalytic and regulatory chains. It depends on Zn(2+) as a cofactor.

Functionally, involved in allosteric regulation of aspartate carbamoyltransferase. The protein is Aspartate carbamoyltransferase regulatory chain of Yersinia enterocolitica serotype O:8 / biotype 1B (strain NCTC 13174 / 8081).